The sequence spans 331 residues: Adenosine deaminase (331 aa).

The Zn(2+) site is built by histidine 12 and histidine 14. The substrate site is built by histidine 14, aspartate 16, and glycine 170. Histidine 197 is a Zn(2+) binding site. The Proton donor role is filled by glutamate 200. Aspartate 278 is a binding site for Zn(2+). Aspartate 279 lines the substrate pocket.

Belongs to the metallo-dependent hydrolases superfamily. Adenosine and AMP deaminases family. Adenosine deaminase subfamily. Zn(2+) is required as a cofactor.

It catalyses the reaction adenosine + H2O + H(+) = inosine + NH4(+). The enzyme catalyses 2'-deoxyadenosine + H2O + H(+) = 2'-deoxyinosine + NH4(+). Catalyzes the hydrolytic deamination of adenosine and 2-deoxyadenosine. This chain is Adenosine deaminase, found in Shewanella sp. (strain W3-18-1).